A 416-amino-acid chain; its full sequence is Neamine transaminase NeoN (416 aa).

Position 231 is an N6-(pyridoxal phosphate)lysine (Lys-231).

The protein belongs to the class-III pyridoxal-phosphate-dependent aminotransferase family. Pyridoxal 5'-phosphate serves as cofactor.

The catalysed reaction is neomycin C + 2-oxoglutarate = 6'''-deamino-6'''-oxoneomycin C + L-glutamate. The enzyme catalyses neamine + 2-oxoglutarate = 6'-oxoparomamine + L-glutamate. Its pathway is antibiotic biosynthesis; neomycin biosynthesis. 6'-oxoglucosaminyl:L-glutamate aminotransferase that catalyzes pyridoxal-5'-phosphate-mediated transamination for the conversion of paromamine to neamine in the biosynthetic pathway of neomycin. Also able to catalyze deamination at C-6''' of neomycin. This chain is Neamine transaminase NeoN (neoN), found in Streptomyces fradiae (Streptomyces roseoflavus).